We begin with the raw amino-acid sequence, 339 residues long: Olfactory receptor 7E24 (339 aa).

Residues 1–43 (MSYFPILFFFFLKRCPSYTEPQNLTGVSEFLLLGLSEDPELQP) are Extracellular-facing. Asn-23 is a glycosylation site (N-linked (GlcNAc...) asparagine). A helical transmembrane segment spans residues 44–64 (VLAGLFLSMYLVTVLGNLLII). At 65–72 (LAVSSDSH) the chain is on the cytoplasmic side. Residues 73–93 (LHTPMYFFLSNLSLADIGFTS) form a helical membrane-spanning segment. The Extracellular portion of the chain corresponds to 94–117 (TTVPKMIVDMQTHSRVISYEGCLT). An intrachain disulfide couples Cys-115 to Cys-207. A helical membrane pass occupies residues 118–138 (QMSFFVLFACMDDMLLSVMAY). At 139–157 (DRFVAICHPLHYRIIMNPR) the chain is on the cytoplasmic side. Residues 158–178 (LCGFLILLSFFISLLDSQLHN) traverse the membrane as a helical segment. Residues 179–215 (LIMLQLTCFKDVDISNFFCDPSQLLHLRCSDTFINEM) are Extracellular-facing. A helical transmembrane segment spans residues 216–235 (VIYFMGAIFGCLPISGILFS). Residues 236–255 (YYKIVSPILRVPTSDGKYKA) are Cytoplasmic-facing. A helical membrane pass occupies residues 256-276 (FSTCGSHLAVVCLFYGTGLVG). Over 277 to 289 (YLSSAVLPSPRKS) the chain is Extracellular. The helical transmembrane segment at 290-310 (MVASVMYTVVTPMLNPFIYSL) threads the bilayer. At 311–339 (RNKDIQSALCRLHGRIIKSHHLHPFCYMG) the chain is on the cytoplasmic side.

Belongs to the G-protein coupled receptor 1 family.

It is found in the cell membrane. In terms of biological role, odorant receptor. The protein is Olfactory receptor 7E24 (OR7E24) of Homo sapiens (Human).